Here is a 320-residue protein sequence, read N- to C-terminus: Cytochrome f (320 aa).

An N-terminal signal peptide occupies residues 1–35; that stretch reads MQTRNAFSWLKKQITRSISVSLMIYILTRTSISSA. Tyrosine 36, cysteine 56, cysteine 59, and histidine 60 together coordinate heme. The helical transmembrane segment at 286-306 threads the bilayer; the sequence is AQGLLFFLASVILAQIFLVLK.

This sequence belongs to the cytochrome f family. In terms of assembly, the 4 large subunits of the cytochrome b6-f complex are cytochrome b6, subunit IV (17 kDa polypeptide, petD), cytochrome f and the Rieske protein, while the 4 small subunits are PetG, PetL, PetM and PetN. The complex functions as a dimer. It depends on heme as a cofactor.

The protein resides in the plastid. It is found in the chloroplast thylakoid membrane. Component of the cytochrome b6-f complex, which mediates electron transfer between photosystem II (PSII) and photosystem I (PSI), cyclic electron flow around PSI, and state transitions. In Nicotiana tomentosiformis (Tobacco), this protein is Cytochrome f.